We begin with the raw amino-acid sequence, 93 residues long: Photosystem I iron-sulfur center (93 aa).

2 consecutive 4Fe-4S ferredoxin-type domains span residues 13-43 (KDHEIRIYSTCIGCTQCVRACPTDVLEMVPS) and 50-80 (QVVTVPRIEDCVGCKRCESACPTDFLSIRVY). [4Fe-4S] cluster is bound by residues C23, C26, C29, C33, C60, C63, C66, and C70.

In terms of assembly, the eukaryotic PSI reaction center is composed of at least 11 subunits. [4Fe-4S] cluster serves as cofactor.

It is found in the plastid. The protein localises to the chloroplast thylakoid membrane. The enzyme catalyses reduced [plastocyanin] + hnu + oxidized [2Fe-2S]-[ferredoxin] = oxidized [plastocyanin] + reduced [2Fe-2S]-[ferredoxin]. Functionally, apoprotein for the two 4Fe-4S centers FA and FB of photosystem I (PSI); essential for photochemical activity. FB is the terminal electron acceptor of PSI, donating electrons to ferredoxin. The C-terminus interacts with PsaA/B/D and helps assemble the protein into the PSI complex. Required for binding of PsaD and PsaE to PSI. PSI is a plastocyanin-ferredoxin oxidoreductase, converting photonic excitation into a charge separation, which transfers an electron from the donor P700 chlorophyll pair to the spectroscopically characterized acceptors A0, A1, FX, FA and FB in turn. The polypeptide is Photosystem I iron-sulfur center (Bigelowiella natans (Pedinomonas minutissima)).